Reading from the N-terminus, the 596-residue chain is Inactive metallocarboxypeptidase ECM14 (596 aa).

An N-terminal signal peptide occupies residues 1 to 22 (MHFSVRLSLFLTLASSLPLVSA). Positions 23–184 (VPQHEDQAYT…QTIYESYPKA (162 aa)) are excised as a propeptide. Positions 181 to 210 (YPKAGSAPPSQQGPTTRRFSPSASTSKSKP) are disordered. Positions 188-207 (PPSQQGPTTRRFSPSASTSK) are enriched in polar residues. Residues 220-546 (DYQPLSVLLP…RAMVAMGKFL (327 aa)) form the Peptidase M14 domain. Zn(2+)-binding residues include H285 and E288. Substrate is bound by residues 285 to 288 (HARE), R343, and 360 to 361 (DH). A disulfide bridge links C354 with C377. N-linked (GlcNAc...) asparagine glycosylation occurs at N370. H417 contacts Zn(2+). 418 to 419 (SY) serves as a coordination point for substrate. The interval 557–596 (DGLRASEEPQDYDNDLEDGEDDKDEQDSTVFRAQADDLQS) is disordered. The segment covering 564 to 583 (EPQDYDNDLEDGEDDKDEQD) has biased composition (acidic residues).

This sequence belongs to the peptidase M14 family. Zn(2+) is required as a cofactor.

It localises to the vacuole. It is found in the secreted. In terms of biological role, inactive carboxypeptidase that may play a role in cell wall organization and biogenesis. The chain is Inactive metallocarboxypeptidase ECM14 (ECM14) from Trichophyton verrucosum (strain HKI 0517).